Here is a 282-residue protein sequence, read N- to C-terminus: Adenosylcobinamide-GDP ribazoletransferase (282 aa).

A run of 6 helical transmembrane segments spans residues 47–67 (GVGI…QALL), 72–92 (FTPL…TGGF), 124–144 (AFGA…LAML), 167–187 (AALL…IWLL), 208–228 (GSLL…GLAL), and 231–251 (ISLI…GALF).

This sequence belongs to the CobS family. The cofactor is Mg(2+).

The protein resides in the cell inner membrane. It carries out the reaction alpha-ribazole + adenosylcob(III)inamide-GDP = adenosylcob(III)alamin + GMP + H(+). It catalyses the reaction alpha-ribazole 5'-phosphate + adenosylcob(III)inamide-GDP = adenosylcob(III)alamin 5'-phosphate + GMP + H(+). It functions in the pathway cofactor biosynthesis; adenosylcobalamin biosynthesis; adenosylcobalamin from cob(II)yrinate a,c-diamide: step 7/7. In terms of biological role, joins adenosylcobinamide-GDP and alpha-ribazole to generate adenosylcobalamin (Ado-cobalamin). Also synthesizes adenosylcobalamin 5'-phosphate from adenosylcobinamide-GDP and alpha-ribazole 5'-phosphate. This Polaromonas sp. (strain JS666 / ATCC BAA-500) protein is Adenosylcobinamide-GDP ribazoletransferase.